The primary structure comprises 390 residues: LIM/homeobox protein Lhx4 (390 aa).

LIM zinc-binding domains lie at 28 to 87 (PQCA…RFGT) and 88 to 150 (KCTA…AKQN). Positions 157–216 (AKRPRTTITAKQLETLKNAYKNSPKPARHVREQLSSETGLDMRVVQVWFQNRRAKEKRLK) form a DNA-binding region, homeobox. The tract at residues 161 to 181 (RTTITAKQLETLKNAYKNSPK) is interaction with DNA. Residues 199–211 (RVVQVWFQNRRAK) form an interaction with 5-mCpG DNA region. Disordered stretches follow at residues 231–253 (VKRS…GVSD) and 355–390 (MAGG…HPPF).

Transient expression in ventrolateral regions of the developing neural tube and hindbrain.

The protein localises to the nucleus. Functionally, may play a critical role in the development of respiratory control mechanisms and in the normal growth and maturation of the lung. Binds preferentially to methylated DNA. The polypeptide is LIM/homeobox protein Lhx4 (Lhx4) (Mus musculus (Mouse)).